Reading from the N-terminus, the 153-residue chain is UPF0260 protein YcgN (153 aa).

The protein belongs to the UPF0260 family.

The sequence is that of UPF0260 protein YcgN from Salmonella typhi.